The sequence spans 348 residues: Ion-translocating oxidoreductase complex subunit D (348 aa).

The next 5 helical transmembrane spans lie at L15–A35, Y36–I56, P67–S87, I88–A108, and V125–I145. T186 is subject to FMN phosphoryl threonine. Transmembrane regions (helical) follow at residues L212–I232, I241–P261, L265–T285, L298–P318, and A320–Q340.

Belongs to the NqrB/RnfD family. As to quaternary structure, the complex is composed of six subunits: RnfA, RnfB, RnfC, RnfD, RnfE and RnfG. It depends on FMN as a cofactor.

Its subcellular location is the cell inner membrane. Its function is as follows. Part of a membrane-bound complex that couples electron transfer with translocation of ions across the membrane. The sequence is that of Ion-translocating oxidoreductase complex subunit D from Actinobacillus pleuropneumoniae serotype 5b (strain L20).